A 255-amino-acid chain; its full sequence is Placenta-expressed transcript 1 protein (255 aa).

Positions 1–26 (MPALRTLLPHLGLFLCLALCFSPSFS) are cleaved as a signal peptide. 3 N-linked (GlcNAc...) asparagine glycosylation sites follow: Asn57, Asn67, and Asn126. Ser236 carries GPI-anchor amidated serine lipidation. Positions 237-255 (PLAGALHILLVFLISKLLF) are cleaved as a propeptide — removed in mature form.

N-glycosylated. In terms of processing, GPI-anchored.

It localises to the apical cell membrane. In terms of biological role, modulates leading keratinocyte migration and cellular adhesion to matrix proteins during a wound-healing response and promotes wound repair. May play a role during trichilemmal differentiation of the hair follicle. This chain is Placenta-expressed transcript 1 protein (Plet1), found in Rattus norvegicus (Rat).